Consider the following 310-residue polypeptide: Sporozoite surface protein P36 (310 aa).

An N-terminal signal peptide occupies residues Met-1–Met-24. 6-Cys domains are found at residues Ala-25–Thr-157 and Tyr-168–Ala-309. Disulfide bonds link Cys-38/Cys-48, Cys-62/Cys-137, Cys-80/Cys-135, Cys-172/Cys-196, Cys-210/Cys-291, and Cys-227/Cys-289. Asn-72, Asn-114, and Asn-118 each carry an N-linked (GlcNAc...) asparagine glycan. An N-linked (GlcNAc...) asparagine glycan is attached at Asn-290.

It is found in the cell surface. The protein localises to the cell membrane. Functionally, involved in sporozoite infection of hepatocytes and replication therein. This chain is Sporozoite surface protein P36 (P36), found in Plasmodium yoelii yoelii.